A 366-amino-acid polypeptide reads, in one-letter code: L-idonate 5-dehydrogenase (366 aa).

Zn(2+) contacts are provided by cysteine 56, histidine 81, cysteine 111, cysteine 114, cysteine 117, cysteine 125, and glutamate 167.

This sequence belongs to the zinc-containing alcohol dehydrogenase family. Zn(2+) is required as a cofactor.

The catalysed reaction is L-idonate + NAD(+) = 5-dehydro-D-gluconate + NADH + H(+). The protein operates within carbohydrate acid metabolism; L-idonate degradation. Its function is as follows. Involved in the catabolism of ascorbate to tartrate. The enzyme has no activity with NADP(+). The polypeptide is L-idonate 5-dehydrogenase (Vitis vinifera (Grape)).